The primary structure comprises 460 residues: UDP-N-acetylmuramoylalanine--D-glutamate ligase (460 aa).

Residue 117–123 (GTNGKTT) coordinates ATP.

It belongs to the MurCDEF family.

It localises to the cytoplasm. The catalysed reaction is UDP-N-acetyl-alpha-D-muramoyl-L-alanine + D-glutamate + ATP = UDP-N-acetyl-alpha-D-muramoyl-L-alanyl-D-glutamate + ADP + phosphate + H(+). Its pathway is cell wall biogenesis; peptidoglycan biosynthesis. In terms of biological role, cell wall formation. Catalyzes the addition of glutamate to the nucleotide precursor UDP-N-acetylmuramoyl-L-alanine (UMA). In Prochlorococcus marinus (strain MIT 9313), this protein is UDP-N-acetylmuramoylalanine--D-glutamate ligase.